A 564-amino-acid chain; its full sequence is Dihydroxy-acid dehydratase (564 aa).

Cys-53 lines the [2Fe-2S] cluster pocket. Position 85 (Asp-85) interacts with Mg(2+). Residue Cys-126 participates in [2Fe-2S] cluster binding. Mg(2+)-binding residues include Asp-127 and Lys-128. Residue Lys-128 is modified to N6-carboxylysine. A [2Fe-2S] cluster-binding site is contributed by Cys-203. Glu-454 contributes to the Mg(2+) binding site. Ser-480 functions as the Proton acceptor in the catalytic mechanism.

Belongs to the IlvD/Edd family. In terms of assembly, homodimer. [2Fe-2S] cluster serves as cofactor. It depends on Mg(2+) as a cofactor.

It carries out the reaction (2R)-2,3-dihydroxy-3-methylbutanoate = 3-methyl-2-oxobutanoate + H2O. The catalysed reaction is (2R,3R)-2,3-dihydroxy-3-methylpentanoate = (S)-3-methyl-2-oxopentanoate + H2O. It participates in amino-acid biosynthesis; L-isoleucine biosynthesis; L-isoleucine from 2-oxobutanoate: step 3/4. Its pathway is amino-acid biosynthesis; L-valine biosynthesis; L-valine from pyruvate: step 3/4. Its function is as follows. Functions in the biosynthesis of branched-chain amino acids. Catalyzes the dehydration of (2R,3R)-2,3-dihydroxy-3-methylpentanoate (2,3-dihydroxy-3-methylvalerate) into 2-oxo-3-methylpentanoate (2-oxo-3-methylvalerate) and of (2R)-2,3-dihydroxy-3-methylbutanoate (2,3-dihydroxyisovalerate) into 2-oxo-3-methylbutanoate (2-oxoisovalerate), the penultimate precursor to L-isoleucine and L-valine, respectively. The chain is Dihydroxy-acid dehydratase from Mycobacterium ulcerans (strain Agy99).